We begin with the raw amino-acid sequence, 133 residues long: Exonuclease VapC9 (133 aa).

A PINc domain is found at 5-113; that stretch reads YLVDASALYA…LVLVTQDREL (109 aa). The Mg(2+) site is built by D8, D92, and D110.

It belongs to the PINc/VapC protein family. In terms of assembly, homodimer, 2 of which then form a homotetramer. Mg(2+) serves as cofactor.

With respect to regulation, inhibited by EDTA. Functionally, toxic component of a type II toxin-antitoxin (TA) system. In terms of biological role, has ribonuclease activity. Has a slow ssDNA exonuclease activity. This chain is Exonuclease VapC9, found in Pyrobaculum aerophilum (strain ATCC 51768 / DSM 7523 / JCM 9630 / CIP 104966 / NBRC 100827 / IM2).